Here is a 136-residue protein sequence, read N- to C-terminus: Ribonuclease P protein component (136 aa).

The protein belongs to the RnpA family. Consists of a catalytic RNA component (M1 or rnpB) and a protein subunit.

It carries out the reaction Endonucleolytic cleavage of RNA, removing 5'-extranucleotides from tRNA precursor.. In terms of biological role, RNaseP catalyzes the removal of the 5'-leader sequence from pre-tRNA to produce the mature 5'-terminus. It can also cleave other RNA substrates such as 4.5S RNA. The protein component plays an auxiliary but essential role in vivo by binding to the 5'-leader sequence and broadening the substrate specificity of the ribozyme. This chain is Ribonuclease P protein component, found in Burkholderia pseudomallei (strain 1106a).